A 61-amino-acid chain; its full sequence is Potassium channel toxin kappa-KTx 2.8 (61 aa).

Residues G1 to A21 form the signal peptide. Positions C22–E35 are excised as a propeptide. Intrachain disulfides connect C41–C59 and C45–C55.

This sequence belongs to the short scorpion toxin superfamily. Potassium channel inhibitor kappa-KTx family. Kappa-KTx 2 subfamily. Expressed by the venom gland.

The protein resides in the secreted. Voltage-gated potassium channel inhibitor (Kv) that acts on Kv1.3/KCNA3 and Kv7.1/KCNQ1. 1 uM of the toxin inhibits Kv1.3/KCNA3 currents by 35.1%, whereas 10 uM of the toxin inhibits Kv7.1/KCNQ1 currents by 44.9%. The polypeptide is Potassium channel toxin kappa-KTx 2.8 (Heterometrus petersii (Asian forest scorpion)).